Consider the following 565-residue polypeptide: Sulfite reductase [NADPH] hemoprotein beta-component (565 aa).

Cys-429, Cys-435, Cys-474, and Cys-478 together coordinate [4Fe-4S] cluster. Residue Cys-478 participates in siroheme binding.

It belongs to the nitrite and sulfite reductase 4Fe-4S domain family. As to quaternary structure, alpha(8)-beta(8). The alpha component is a flavoprotein, the beta component is a hemoprotein. It depends on siroheme as a cofactor. The cofactor is [4Fe-4S] cluster.

The catalysed reaction is hydrogen sulfide + 3 NADP(+) + 3 H2O = sulfite + 3 NADPH + 4 H(+). The protein operates within sulfur metabolism; hydrogen sulfide biosynthesis; hydrogen sulfide from sulfite (NADPH route): step 1/1. In terms of biological role, component of the sulfite reductase complex that catalyzes the 6-electron reduction of sulfite to sulfide. This is one of several activities required for the biosynthesis of L-cysteine from sulfate. This Shewanella halifaxensis (strain HAW-EB4) protein is Sulfite reductase [NADPH] hemoprotein beta-component.